A 738-amino-acid chain; its full sequence is DNA topoisomerase 4 subunit A (738 aa).

Positions 32–496 constitute a Topo IIA-type catalytic domain; sequence LPDVRDGLKP…SFEEVTLTNQ (465 aa). Y120 functions as the O-(5'-phospho-DNA)-tyrosine intermediate in the catalytic mechanism.

The protein belongs to the type II topoisomerase GyrA/ParC subunit family. ParC type 1 subfamily. In terms of assembly, heterotetramer composed of ParC and ParE.

It localises to the cell membrane. The enzyme catalyses ATP-dependent breakage, passage and rejoining of double-stranded DNA.. Topoisomerase IV is essential for chromosome segregation. It relaxes supercoiled DNA. Performs the decatenation events required during the replication of a circular DNA molecule. The protein is DNA topoisomerase 4 subunit A of Rickettsia conorii (strain ATCC VR-613 / Malish 7).